The primary structure comprises 176 residues: Ribosome maturation factor RimM (176 aa).

The PRC barrel domain occupies 92–165; it reads EDEFLYSDLI…RLVVVPPVYA (74 aa).

It belongs to the RimM family. In terms of assembly, binds ribosomal protein uS19.

It localises to the cytoplasm. Functionally, an accessory protein needed during the final step in the assembly of 30S ribosomal subunit, possibly for assembly of the head region. Essential for efficient processing of 16S rRNA. May be needed both before and after RbfA during the maturation of 16S rRNA. It has affinity for free ribosomal 30S subunits but not for 70S ribosomes. The polypeptide is Ribosome maturation factor RimM (Paramagnetospirillum magneticum (strain ATCC 700264 / AMB-1) (Magnetospirillum magneticum)).